Here is a 381-residue protein sequence, read N- to C-terminus: Trans-enoyl reductase iliB (381 aa).

50-53 (VDGK) contributes to the NADP(+) binding site. 145–152 (ATLATVGL) serves as a coordination point for substrate. Residues 213-216 (SPGS), Tyr-231, and 278-279 (LD) contribute to the NADP(+) site. 298-302 (TYTQF) is a binding site for substrate. 367–368 (IS) lines the NADP(+) pocket.

It belongs to the zinc-containing alcohol dehydrogenase family. As to quaternary structure, monomer.

The enzyme catalyses N-[(4E,6E,10S,12Z,14E)-6,10-dimethyl-3-oxohexadeca-4,6,12,14-tetraenoyl]-L-tyrosyl-[ACP] = (3E,5S)-3-[(2E,4E,8S,10E,12Z)-1-hydroxy-4,8-dimethyltetradeca-2,4,10,12-tetraen-1-ylidene]-5-[(4-hydroxyphenyl)methyl]pyrrolidine-2,4-dione + holo-[ACP] + H(+). It functions in the pathway mycotoxin biosynthesis. Its function is as follows. Trans-enoyl reductase; part of the gene cluster that mediates the biosynthesis of ilicicolin H, a 4-hydroxy-2-pyridonealkaloid that has potent and broad antifungal activities by inhibiting the mitochondrial respiration chain. IliB collaborates with the hybrid PKS-NRPS synthetase iliA to assemble the backbone of ilicicolin H. The PKS portion of iliA and trans-acting enoyl reductase iliB work together to construct an octaketide, and two methyl groups are introduced by the MT domain of iliA during the chain assembly. The nascent chain is then condensed with tyrosine, catalyzed by the iliA C domain, and the resulting PKS-NRPS hybrid is offloaded by the iliA RED domain to form an advanced tetramic acid intermediate. The biosynthesis of ilicicolin H starts with formation of the tetramic acid by the hybrid PKS-NRPS synthetase iliA with the partnering trans-enoyl reductase iliB since iliA lacks a designated enoylreductase (ER) domain. The cytochrome P450 monooxygenase iliC then catalyzes the ring expansion of the tetramate to the acyclic 2-pyridone. The pericyclase iliD further converts the acyclic 2-pyridone into 8-epi-ilicicolin H. 8-epi-ilicicolin H might then spontaneously convert to ilicicolin H since ilicicolin H is produced in the absence of the epimerase iliE, in contrast to what was observed for the Talaromyces variabilis ilicolin H biosynthetic pathway. The protein is Trans-enoyl reductase iliB of Neonectria sp. (strain DH2).